Here is a 319-residue protein sequence, read N- to C-terminus: HTH-type transcriptional regulator YidZ (319 aa).

The region spanning L8 to T65 is the HTH lysR-type domain. Residues V25–A44 constitute a DNA-binding region (H-T-H motif).

The protein belongs to the LysR transcriptional regulatory family.

Its function is as follows. Involved in anaerobic NO protection. In Salmonella heidelberg (strain SL476), this protein is HTH-type transcriptional regulator YidZ.